Consider the following 712-residue polypeptide: Lactoperoxidase (712 aa).

The N-terminal stretch at 1 to 22 (MWVCLQLPVFLASVTLFEVAAS) is a signal peptide. Residues 23-100 (DTIAQAASTT…WEESLKRLRR (78 aa)) constitute a propeptide that is removed on maturation. A glycan (N-linked (GlcNAc...) asparagine) is linked at Asn106. Intrachain disulfides connect Cys123/Cys284, Cys132/Cys145, Cys246/Cys256, and Cys250/Cys274. Asn212 carries an N-linked (GlcNAc...) asparagine glycan. Asp225 contacts heme b. His226 serves as the catalytic Proton acceptor. Asp227 is a Ca(2+) binding site. Ca(2+)-binding residues include Thr301, Phe303, Asp305, and Ser307. Phosphoserine is present on Ser315. N-linked (GlcNAc...) asparagine glycans are attached at residues Asn322 and Asn358. Cys354 and Cys365 are joined by a disulfide. A heme b-binding site is contributed by Glu375. The N-linked (GlcNAc...) asparagine glycan is linked to Asn449. His468 is a heme b binding site. Residue Tyr482 is modified to 3'-nitrotyrosine. 2 cysteine pairs are disulfide-bonded: Cys573–Cys630 and Cys671–Cys696.

Belongs to the peroxidase family. XPO subfamily. The cofactor is Ca(2+). Heme b serves as cofactor. As to expression, mammary gland; milk.

It is found in the secreted. The protein localises to the cytoplasm. It carries out the reaction 2 a phenolic donor + H2O2 = 2 a phenolic radical donor + 2 H2O. The enzyme catalyses thiocyanate + H2O2 + H(+) = hypothiocyanous acid + H2O. It catalyses the reaction iodide + H2O2 = hypoiodite + H2O. Its function is as follows. Heme-containing oxidoreductase which catalyzes the conversion of thiocyanate (SCN(-)) into antimicrobial agent hypothiocyanous acid (OSCN(-)) in the presence of hydrogen peroxide (H2O2). Also involved in the conversion of iodide (I(-)) into hypoiodite (IO(-)) in the presence of H2O2. Responsible for the inactivation of a wide range of micro-organisms and hence, important component of defense mechanism. The lactoperoxidase-SCN(-)-H2O2 system shows antibacterial properties against some streptococci strains. The lactoperoxidase-I(-)-H2O2 system shows antibacterial properties against E.coli. May protect the udder from infection and may promote growth in newborns. May be implicated in airway host defense against infection. May contribute to maintaining an appropriate H2O2 cellular level, therefore protecting cells from H2O2-caused injuries and inflammation. The protein is Lactoperoxidase (LPO) of Bos taurus (Bovine).